The following is a 385-amino-acid chain: S-adenosylmethionine synthase (385 aa).

His15 serves as a coordination point for ATP. Asp17 serves as a coordination point for Mg(2+). Glu43 lines the K(+) pocket. L-methionine-binding residues include Glu56 and Gln99. Residues 99–109 are flexible loop; that stretch reads QSPDINKGINN. ATP-binding positions include 164-166, 230-231, Asp239, 245-246, Ala262, and Lys266; these read DAK, RF, and RK. Residue Asp239 coordinates L-methionine. Residue Lys270 participates in L-methionine binding.

This sequence belongs to the AdoMet synthase family. As to quaternary structure, homotetramer; dimer of dimers. Mg(2+) serves as cofactor. The cofactor is K(+).

It localises to the cytoplasm. The enzyme catalyses L-methionine + ATP + H2O = S-adenosyl-L-methionine + phosphate + diphosphate. It participates in amino-acid biosynthesis; S-adenosyl-L-methionine biosynthesis; S-adenosyl-L-methionine from L-methionine: step 1/1. Functionally, catalyzes the formation of S-adenosylmethionine (AdoMet) from methionine and ATP. The overall synthetic reaction is composed of two sequential steps, AdoMet formation and the subsequent tripolyphosphate hydrolysis which occurs prior to release of AdoMet from the enzyme. This is S-adenosylmethionine synthase from Baumannia cicadellinicola subsp. Homalodisca coagulata.